The sequence spans 498 residues: Glycerol kinase (498 aa).

Residue Thr12 coordinates ADP. The ATP site is built by Thr12, Thr13, and Ser14. Thr12 contacts sn-glycerol 3-phosphate. Position 16 (Arg16) interacts with ADP. Residues Arg82, Glu83, Tyr134, and Asp244 each coordinate sn-glycerol 3-phosphate. Residues Arg82, Glu83, Tyr134, Asp244, and Gln245 each contribute to the glycerol site. ADP is bound by residues Thr266 and Gly310. 4 residues coordinate ATP: Thr266, Gly310, Gln314, and Gly411. ADP is bound by residues Gly411 and Asn415.

Belongs to the FGGY kinase family.

It catalyses the reaction glycerol + ATP = sn-glycerol 3-phosphate + ADP + H(+). It participates in polyol metabolism; glycerol degradation via glycerol kinase pathway; sn-glycerol 3-phosphate from glycerol: step 1/1. Inhibited by fructose 1,6-bisphosphate (FBP). In terms of biological role, key enzyme in the regulation of glycerol uptake and metabolism. Catalyzes the phosphorylation of glycerol to yield sn-glycerol 3-phosphate. The sequence is that of Glycerol kinase from Chloroflexus aggregans (strain MD-66 / DSM 9485).